The following is a 321-amino-acid chain: Calcium-binding protein LPS1-alpha (321 aa).

8 EF-hand domains span residues 15-49, 47-82, 85-120, 121-156, 165-200, 200-233, 232-267, and 269-304; these read DAIE…NWTE, WTEE…STKE, YSSD…IYTK, VVDG…KLPI, EYRE…STKY, YSDK…DGVS, VSKD…IYRQ, and VDFE…NCPY. Residues Asp-29, Asn-31, Asp-33, Thr-35, Glu-40, Asp-60, Asn-62, Asp-64, His-66, Glu-71, Asp-98, Asp-100, Asn-102, Arg-104, Glu-109, Asp-134, Asp-136, Asp-138, His-140, Glu-145, Asp-178, Asn-180, Asp-182, Ser-184, Glu-189, Asp-213, Asn-215, Asp-217, Arg-219, Glu-224, Asp-245, Asp-247, Asn-249, Lys-251, Glu-256, Asp-284, Asp-286, Tyr-288, and Glu-293 each coordinate Ca(2+).

Aboral ectoderm, a squamous epithelium covering the surface of the late stage embryo and larva.

In terms of biological role, calcium-binding protein involved in larval development and metamorphosis. Likely to function as calcium buffers mediating the transport of calcium from the sea water to the blastocoel where calcium is required for skeleton formation. The sequence is that of Calcium-binding protein LPS1-alpha from Lytechinus pictus (Painted sea urchin).